The sequence spans 366 residues: Dual-specificity RNA methyltransferase RlmN (366 aa).

The active-site Proton acceptor is the Glu91. One can recognise a Radical SAM core domain in the interval 97 to 333; it reads EDDRGTLCVS…TTVRKTRGED (237 aa). Cys104 and Cys338 are disulfide-bonded. Positions 111, 115, and 118 each coordinate [4Fe-4S] cluster. Residues 164–165, Ser196, 218–220, and Asn295 each bind S-adenosyl-L-methionine; these read GE and SLH. The active-site S-methylcysteine intermediate is Cys338.

This sequence belongs to the radical SAM superfamily. RlmN family. [4Fe-4S] cluster serves as cofactor.

It localises to the cytoplasm. It catalyses the reaction adenosine(2503) in 23S rRNA + 2 reduced [2Fe-2S]-[ferredoxin] + 2 S-adenosyl-L-methionine = 2-methyladenosine(2503) in 23S rRNA + 5'-deoxyadenosine + L-methionine + 2 oxidized [2Fe-2S]-[ferredoxin] + S-adenosyl-L-homocysteine. The enzyme catalyses adenosine(37) in tRNA + 2 reduced [2Fe-2S]-[ferredoxin] + 2 S-adenosyl-L-methionine = 2-methyladenosine(37) in tRNA + 5'-deoxyadenosine + L-methionine + 2 oxidized [2Fe-2S]-[ferredoxin] + S-adenosyl-L-homocysteine. Functionally, specifically methylates position 2 of adenine 2503 in 23S rRNA and position 2 of adenine 37 in tRNAs. m2A2503 modification seems to play a crucial role in the proofreading step occurring at the peptidyl transferase center and thus would serve to optimize ribosomal fidelity. The chain is Dual-specificity RNA methyltransferase RlmN from Laribacter hongkongensis (strain HLHK9).